Here is a 457-residue protein sequence, read N- to C-terminus: Tubulin beta chain (457 aa).

Positions 11, 69, 138, 142, 143, 144, 204, and 226 each coordinate GTP. Glu-69 contacts Mg(2+). Phosphoserine occurs at positions 278 and 280. The interval 423–457 (QQYQEATVEDDEEVDENGDFGAPQNQDEPITENFE) is disordered. Positions 429–440 (TVEDDEEVDENG) are enriched in acidic residues.

Belongs to the tubulin family. As to quaternary structure, dimer of alpha and beta chains. A typical microtubule is a hollow water-filled tube with an outer diameter of 25 nm and an inner diameter of 15 nM. Alpha-beta heterodimers associate head-to-tail to form protofilaments running lengthwise along the microtubule wall with the beta-tubulin subunit facing the microtubule plus end conferring a structural polarity. Microtubules usually have 13 protofilaments but different protofilament numbers can be found in some organisms and specialized cells. Mg(2+) serves as cofactor.

Its subcellular location is the cytoplasm. It localises to the cytoskeleton. Tubulin is the major constituent of microtubules, a cylinder consisting of laterally associated linear protofilaments composed of alpha- and beta-tubulin heterodimers. Microtubules grow by the addition of GTP-tubulin dimers to the microtubule end, where a stabilizing cap forms. Below the cap, tubulin dimers are in GDP-bound state, owing to GTPase activity of alpha-tubulin. The protein is Tubulin beta chain (TUB2) of Saccharomyces cerevisiae (strain ATCC 204508 / S288c) (Baker's yeast).